A 215-amino-acid chain; its full sequence is DNA repair and recombination protein RadB (215 aa).

Belongs to the eukaryotic RecA-like protein family. RadB subfamily.

Functionally, involved in DNA repair and in homologous recombination. May regulate the cleavage reactions of the branch-structured DNA. Has a very weak ATPase activity that is not stimulated by DNA. Binds DNA but does not promote DNA strands exchange. The chain is DNA repair and recombination protein RadB from Methanococcus maripaludis (strain C7 / ATCC BAA-1331).